The primary structure comprises 1421 residues: ALK tyrosine kinase receptor homolog scd-2 (1421 aa).

Positions 1 to 20 (MRKRRLWWFVVLFRVTLVGA) are cleaved as a signal peptide. The Extracellular portion of the chain corresponds to 21–903 (ILPNETFDVR…DTCEEIQIWT (883 aa)). Residues Asn24, Asn44, Asn70, Asn83, Asn119, and Asn201 are each glycosylated (N-linked (GlcNAc...) asparagine). Residues 300 to 338 (QCSRGDQFLCSISANTRCLQNAQCDSRIDCDDESDEMDC) enclose the LDL-receptor class A domain. Intrachain disulfides connect Cys301/Cys317, Cys309/Cys329, and Cys323/Cys338. An MAM domain is found at 339-542 (GNINGTMCDF…NLSFSPTCFE (204 aa)). Asn342, Asn362, Asn495, Asn533, Asn546, Asn633, Asn726, Asn793, Asn849, Asn873, and Asn893 each carry an N-linked (GlcNAc...) asparagine glycan. A helical transmembrane segment spans residues 904–924 (LYNITFLIFAALTIIGALFVV). Residues 925-1421 (YHYRNREKQM…SVPLLECQTR (497 aa)) are Cytoplasmic-facing. A Protein kinase domain is found at 976–1261 (IERGRVLGRG…GMPFPIHPAV (286 aa)). ATP is bound by residues 982–990 (LGRGNFGEV) and Lys1003. The active-site Proton acceptor is Asp1106.

It belongs to the protein kinase superfamily. Tyr protein kinase family. Insulin receptor subfamily. In terms of assembly, interacts (via cytoplasmic domain) with fsn-1 (via SPRY domain). As to expression, expressed in AIA sensory neurons.

Its subcellular location is the cell membrane. It catalyses the reaction L-tyrosyl-[protein] + ATP = O-phospho-L-tyrosyl-[protein] + ADP + H(+). Functionally, probable tyrosine-protein kinase receptor which regulates the dauer/non-dauer developmental decision probably by controlling daf-3 transcriptional activity in parallel or together with the TGF-beta pathway. Regulates integration of conflicting sensory cues in AIA interneurons. May act as a receptor for hen-1. In AWA neurons, together with hen-1, plays a role in regulating olfactory adaptation by controlling the forgetting sensory responses to odorants such as diacetyl. The protein is ALK tyrosine kinase receptor homolog scd-2 of Caenorhabditis elegans.